A 238-amino-acid polypeptide reads, in one-letter code: Ribonuclease PH (238 aa).

Phosphate is bound by residues R86 and 124 to 126 (GTR).

This sequence belongs to the RNase PH family. As to quaternary structure, homohexameric ring arranged as a trimer of dimers.

The enzyme catalyses tRNA(n+1) + phosphate = tRNA(n) + a ribonucleoside 5'-diphosphate. Functionally, phosphorolytic 3'-5' exoribonuclease that plays an important role in tRNA 3'-end maturation. Removes nucleotide residues following the 3'-CCA terminus of tRNAs; can also add nucleotides to the ends of RNA molecules by using nucleoside diphosphates as substrates, but this may not be physiologically important. Probably plays a role in initiation of 16S rRNA degradation (leading to ribosome degradation) during starvation. The polypeptide is Ribonuclease PH (Parvibaculum lavamentivorans (strain DS-1 / DSM 13023 / NCIMB 13966)).